A 408-amino-acid polypeptide reads, in one-letter code: Energy-coupling factor transporter ATP-binding protein EcfA1 (408 aa).

The ABC transporter domain occupies 140–374; it reads IEINHLSFKY…KDFLRNIQLD (235 aa). 174–181 provides a ligand contact to ATP; it reads GHNGSGKS.

Belongs to the ABC transporter superfamily. Energy-coupling factor EcfA family. Forms a stable energy-coupling factor (ECF) transporter complex composed of 2 membrane-embedded substrate-binding proteins (S component), 2 ATP-binding proteins (A component) and 2 transmembrane proteins (T component).

It localises to the cell membrane. In terms of biological role, ATP-binding (A) component of a common energy-coupling factor (ECF) ABC-transporter complex. Unlike classic ABC transporters this ECF transporter provides the energy necessary to transport a number of different substrates. The sequence is that of Energy-coupling factor transporter ATP-binding protein EcfA1 from Mycoplasma mycoides subsp. mycoides SC (strain CCUG 32753 / NCTC 10114 / PG1).